The following is a 213-amino-acid chain: Large ribosomal subunit protein eL14 (213 aa).

The residue at position 79 (Lys-79) is an N6-acetyllysine. At Lys-85 the chain carries N6-acetyllysine; alternate. N6-succinyllysine; alternate is present on Lys-85. Lys-124 is covalently cross-linked (Glycyl lysine isopeptide (Lys-Gly) (interchain with G-Cter in SUMO2)). Ser-139 carries the post-translational modification Phosphoserine. Residues 166 to 213 (TAGKKAPAQKAPAQKAAGQKAAPPPKAQKVQKPPAQKAPAPKASGEKA) form a disordered region. The 1-1; approximate repeat unit spans residues 169–173 (KKAPA). The interval 169–188 (KKAPAQKAPAQKAAGQKAAP) is 4 X 5 AA tandem repeats of Q-K-A-[APS]-X. 5 tandem repeats follow at residues 174-178 (QKAPA), 179-183 (QKAAG), 184-188 (QKAAP), 191-193 (KAQ), and 194-196 (KVQ). The interval 191–196 (KAQKVQ) is 2 X 3 AA tandem repeats of K-G-Q. Lys-202 carries the post-translational modification N6-succinyllysine.

This sequence belongs to the eukaryotic ribosomal protein eL14 family. In terms of assembly, component of the large ribosomal subunit.

The protein localises to the cytoplasm. Component of the large ribosomal subunit. The ribosome is a large ribonucleoprotein complex responsible for the synthesis of proteins in the cell. This chain is Large ribosomal subunit protein eL14 (RPL14), found in Sus scrofa (Pig).